Reading from the N-terminus, the 328-residue chain is Biotin synthase (328 aa).

The region spanning 48–275 (NRIQLSKLLN…KSHVRLTAGR (228 aa)) is the Radical SAM core domain. The [4Fe-4S] cluster site is built by cysteine 63, cysteine 67, and cysteine 70. [2Fe-2S] cluster contacts are provided by cysteine 107, cysteine 138, cysteine 198, and arginine 270.

It belongs to the radical SAM superfamily. Biotin synthase family. In terms of assembly, homodimer. It depends on [4Fe-4S] cluster as a cofactor. Requires [2Fe-2S] cluster as cofactor.

It catalyses the reaction (4R,5S)-dethiobiotin + (sulfur carrier)-SH + 2 reduced [2Fe-2S]-[ferredoxin] + 2 S-adenosyl-L-methionine = (sulfur carrier)-H + biotin + 2 5'-deoxyadenosine + 2 L-methionine + 2 oxidized [2Fe-2S]-[ferredoxin]. It participates in cofactor biosynthesis; biotin biosynthesis; biotin from 7,8-diaminononanoate: step 2/2. Its function is as follows. Catalyzes the conversion of dethiobiotin (DTB) to biotin by the insertion of a sulfur atom into dethiobiotin via a radical-based mechanism. The protein is Biotin synthase of Brucella ovis (strain ATCC 25840 / 63/290 / NCTC 10512).